A 557-amino-acid polypeptide reads, in one-letter code: Dihydroxy-acid dehydratase (557 aa).

Residue Cys47 participates in [2Fe-2S] cluster binding. Asp79 is a binding site for Mg(2+). Residue Cys120 participates in [2Fe-2S] cluster binding. Residues Asp121 and Lys122 each contribute to the Mg(2+) site. Lys122 is modified (N6-carboxylysine). Cys192 is a [2Fe-2S] cluster binding site. Glu444 lines the Mg(2+) pocket. The active-site Proton acceptor is Ser470.

It belongs to the IlvD/Edd family. In terms of assembly, homodimer. Requires [2Fe-2S] cluster as cofactor. The cofactor is Mg(2+).

It carries out the reaction (2R)-2,3-dihydroxy-3-methylbutanoate = 3-methyl-2-oxobutanoate + H2O. It catalyses the reaction (2R,3R)-2,3-dihydroxy-3-methylpentanoate = (S)-3-methyl-2-oxopentanoate + H2O. The protein operates within amino-acid biosynthesis; L-isoleucine biosynthesis; L-isoleucine from 2-oxobutanoate: step 3/4. It functions in the pathway amino-acid biosynthesis; L-valine biosynthesis; L-valine from pyruvate: step 3/4. Its function is as follows. Functions in the biosynthesis of branched-chain amino acids. Catalyzes the dehydration of (2R,3R)-2,3-dihydroxy-3-methylpentanoate (2,3-dihydroxy-3-methylvalerate) into 2-oxo-3-methylpentanoate (2-oxo-3-methylvalerate) and of (2R)-2,3-dihydroxy-3-methylbutanoate (2,3-dihydroxyisovalerate) into 2-oxo-3-methylbutanoate (2-oxoisovalerate), the penultimate precursor to L-isoleucine and L-valine, respectively. This is Dihydroxy-acid dehydratase from Parasynechococcus marenigrum (strain WH8102).